We begin with the raw amino-acid sequence, 226 residues long: Ribosomal RNA small subunit methyltransferase Nep1 (226 aa).

S-adenosyl-L-methionine is bound by residues glycine 176, glycine 181, and 197 to 202 (IYEESL).

It belongs to the class IV-like SAM-binding methyltransferase superfamily. RNA methyltransferase NEP1 family. In terms of assembly, homodimer.

The catalysed reaction is a pseudouridine in rRNA + S-adenosyl-L-methionine = an N(1)-methylpseudouridine in rRNA + S-adenosyl-L-homocysteine + H(+). Its function is as follows. Methyltransferase involved in ribosomal biogenesis. Specifically catalyzes the N1-methylation of the pseudouridine corresponding to position 914 in M.jannaschii 16S rRNA. The protein is Ribosomal RNA small subunit methyltransferase Nep1 of Methanothrix thermoacetophila (strain DSM 6194 / JCM 14653 / NBRC 101360 / PT) (Methanosaeta thermophila).